The following is a 461-amino-acid chain: uncharacterized protein (461 aa).

The segment covering 1–19 (MEKCSHESGRHSAENDGKY) has biased composition (basic and acidic residues). The disordered stretch occupies residues 1-21 (MEKCSHESGRHSAENDGKYDI).

Belongs to the CapA family.

Its function is as follows. Could be involved in the biosynthesis of a cell wall component. This is an uncharacterized protein from Sinorhizobium fredii (strain NBRC 101917 / NGR234).